The sequence spans 590 residues: Arginine--tRNA ligase (590 aa).

The short motif at 126–136 is the 'HIGH' region element; the sequence is PNVAKEMHVGH.

Belongs to the class-I aminoacyl-tRNA synthetase family. Monomer.

It localises to the cytoplasm. It carries out the reaction tRNA(Arg) + L-arginine + ATP = L-arginyl-tRNA(Arg) + AMP + diphosphate. In Streptomyces avermitilis (strain ATCC 31267 / DSM 46492 / JCM 5070 / NBRC 14893 / NCIMB 12804 / NRRL 8165 / MA-4680), this protein is Arginine--tRNA ligase.